Here is a 584-residue protein sequence, read N- to C-terminus: Aspartate--tRNA(Asp/Asn) ligase (584 aa).

Glu173 is a binding site for L-aspartate. The segment at 197–200 (QLFK) is aspartate. An L-aspartate-binding site is contributed by Arg219. ATP contacts are provided by residues 219–221 (RDE) and Gln228. Residue His447 participates in L-aspartate binding. Residue Glu477 coordinates ATP. Arg484 serves as a coordination point for L-aspartate. 529–532 (GFDR) serves as a coordination point for ATP.

The protein belongs to the class-II aminoacyl-tRNA synthetase family. Type 1 subfamily. In terms of assembly, homodimer.

It localises to the cytoplasm. It catalyses the reaction tRNA(Asx) + L-aspartate + ATP = L-aspartyl-tRNA(Asx) + AMP + diphosphate. In terms of biological role, aspartyl-tRNA synthetase with relaxed tRNA specificity since it is able to aspartylate not only its cognate tRNA(Asp) but also tRNA(Asn). Reaction proceeds in two steps: L-aspartate is first activated by ATP to form Asp-AMP and then transferred to the acceptor end of tRNA(Asp/Asn). The sequence is that of Aspartate--tRNA(Asp/Asn) ligase from Campylobacter hominis (strain ATCC BAA-381 / DSM 21671 / CCUG 45161 / LMG 19568 / NCTC 13146 / CH001A).